The sequence spans 174 residues: Large ribosomal subunit protein uL13 (174 aa).

Disordered stretches follow at residues 1 to 22 (MAFP…AKSP) and 153 to 174 (GETH…LEVK).

The protein belongs to the universal ribosomal protein uL13 family. Part of the 50S ribosomal subunit. Contacts proteins L3 and L20.

This protein is one of the early assembly proteins of the 50S ribosomal subunit. Binds to the 23S rRNA. The chain is Large ribosomal subunit protein uL13 (rplM) from Deinococcus radiodurans (strain ATCC 13939 / DSM 20539 / JCM 16871 / CCUG 27074 / LMG 4051 / NBRC 15346 / NCIMB 9279 / VKM B-1422 / R1).